We begin with the raw amino-acid sequence, 263 residues long: Palmitoyltransferase ZDHHC22 (263 aa).

Over 1 to 9 (MLALRLLNV) the chain is Cytoplasmic. Residues 10–30 (VAPAYFLCISLVTFVLQLFLF) traverse the membrane as a helical segment. Residues 31-47 (LPSMREDPTATPLFSPA) lie on the Lumenal side of the membrane. The helical transmembrane segment at 48–68 (VLHGALFLFLSANALGNYILV) threads the bilayer. Residues 69-125 (VQNSPDDLGACQGTSSQRPQRPPPSTHFCRVCARVTLRHDHHCFFTGNCIGSRNMRN) are Cytoplasmic-facing. The 41-residue stretch at 91–131 (PPSTHFCRVCARVTLRHDHHCFFTGNCIGSRNMRNFILFCL) folds into the DHHC domain. Cysteine 111 acts as the S-palmitoyl cysteine intermediate in catalysis. 2 helical membrane-spanning segments follow: residues 126-146 (FILFCLYTSLACLYSMVAGVA) and 147-167 (YISAVLSISFAHPLAFLTLLP). Residues 168-182 (TSISQFFSGAVLGSD) are Cytoplasmic-facing. A helical membrane pass occupies residues 183–203 (MFVILMLYLWFAVGLACAGFC). Residues 204 to 263 (CHQLLLILRGQTRYQVRKGVAVRARPWRKNLQEVFGKRWLLGLLVPMFNVGTESSKQQDK) lie on the Lumenal side of the membrane.

It belongs to the DHHC palmitoyltransferase family. In terms of assembly, interacts with CNN3.

It is found in the endoplasmic reticulum membrane. Its subcellular location is the golgi apparatus membrane. The catalysed reaction is L-cysteinyl-[protein] + hexadecanoyl-CoA = S-hexadecanoyl-L-cysteinyl-[protein] + CoA. Functionally, palmitoyltransferase that could catalyze the addition of palmitate onto various protein substrates and be involved in a variety of cellular processes. Catalyzes the palmitoylation of KCNMA1, regulating localization of KCNMA1 to the plasma membrane. Might also mediate palmitoylation of CNN3. The chain is Palmitoyltransferase ZDHHC22 from Rattus norvegicus (Rat).